Consider the following 176-residue polypeptide: Ribosome maturation factor RimM (176 aa).

The 80-residue stretch at 93–172 folds into the PRC barrel domain; that stretch reads KDEFFYFDII…KIQVKNSLDI (80 aa).

Belongs to the RimM family. In terms of assembly, binds ribosomal protein uS19.

It is found in the cytoplasm. In terms of biological role, an accessory protein needed during the final step in the assembly of 30S ribosomal subunit, possibly for assembly of the head region. Essential for efficient processing of 16S rRNA. May be needed both before and after RbfA during the maturation of 16S rRNA. It has affinity for free ribosomal 30S subunits but not for 70S ribosomes. The protein is Ribosome maturation factor RimM of Campylobacter fetus subsp. fetus (strain 82-40).